We begin with the raw amino-acid sequence, 685 residues long: Multicopper oxidase VdtB (685 aa).

A signal peptide spans 1–17 (MPAYLLLLACNVLLVLG). Plastocyanin-like domains are found at residues 26 to 139 (LTWE…IRRK) and 168 to 368 (IMML…RYKN). A glycan (N-linked (GlcNAc...) asparagine) is linked at Asn71. Cu cation-binding residues include His75, His77, His119, and His121. Residues Asn178, Asn229, Asn253, Asn432, and Asn475 are each glycosylated (N-linked (GlcNAc...) asparagine). In terms of domain architecture, Plastocyanin-like 3 spans 466 to 585 (DDDLIIRTQN…DNGMAMAILD (120 aa)). His500 is a binding site for Cu cation. Asn517 is a glycosylation site (N-linked (GlcNAc...) asparagine). A helical membrane pass occupies residues 627–647 (SLVWAGGAAVVLLSLFIGGLW).

Belongs to the multicopper oxidase family.

It is found in the membrane. The enzyme catalyses 4 semiviriditoxin + O2 = 2 (M)-viriditoxin + 2 H2O. Its pathway is secondary metabolite biosynthesis. In terms of biological role, multicopper oxidase; part of the gene cluster that mediates the biosynthesis of viriditoxin, one of the 'classical' secondary metabolites produced by fungi and that has antibacterial activity. The first step is performed by the polyketide synthase VdtA which condenses one acetyl-CoA and 6 malonyl-CoA units to form the heptaketide monomer backbone of viriditoxin. The product of VdtA is then O-methylated on C7 by the O-methyltransferase VdtC. The O-methyl group is important for the stereoselective coupling of the monomers at the final step of viriditoxin biosynthesis. The short-chain dehydrogenase/reductase VdtF then acts as a stereospecific reductase converting the pyrone to dihydropyrone via the reduction of the C3-C4 double bond. The FAD-binding monooxygenase VdtE then converts the ketone group into a methyl-ester group to yield semi-viriditoxin. Finally, the laccase VdtB is involved in dimerization of 2 semi-viriditoxin molecules to yield the final viriditoxin. VdtB is responsible for the regioselective 6,6'-coupling of semi-viriditoxin, which yields (M)-viriditoxin and (P)-viriditoxin at a ratio of 1:2. The non-catalytic carboxylesterase-like protein VdtD affects the stereochemistical outcome of the coupling. The highly reducing polyketide synthase VdtX is not involved in viriditoxin synthesis, but might possibly play a role in the production of additional metabolites not identified yet. This is Multicopper oxidase VdtB from Byssochlamys spectabilis (Paecilomyces variotii).